We begin with the raw amino-acid sequence, 130 residues long: Small ribosomal subunit protein uS8 (130 aa).

The protein belongs to the universal ribosomal protein uS8 family. Part of the 30S ribosomal subunit.

Its function is as follows. One of the primary rRNA binding proteins, it binds directly to 16S rRNA central domain where it helps coordinate assembly of the platform of the 30S subunit. In Methanocorpusculum labreanum (strain ATCC 43576 / DSM 4855 / Z), this protein is Small ribosomal subunit protein uS8.